The sequence spans 103 residues: Small ribosomal subunit protein uS10 (103 aa).

Belongs to the universal ribosomal protein uS10 family. As to quaternary structure, part of the 30S ribosomal subunit.

Involved in the binding of tRNA to the ribosomes. The chain is Small ribosomal subunit protein uS10 from Acetivibrio thermocellus (strain ATCC 27405 / DSM 1237 / JCM 9322 / NBRC 103400 / NCIMB 10682 / NRRL B-4536 / VPI 7372) (Clostridium thermocellum).